The primary structure comprises 120 residues: Putative ankyrin repeat protein RBE_1215 (120 aa).

2 ANK repeats span residues aspartate 22–isoleucine 52 and phenylalanine 59–valine 88.

This is Putative ankyrin repeat protein RBE_1215 from Rickettsia bellii (strain RML369-C).